Reading from the N-terminus, the 257-residue chain is Anamorsin homolog (257 aa).

The tract at residues 1–132 is N-terminal SAM-like domain; that stretch reads MSVLALDVAR…ARGTAFALKS (132 aa). The linker stretch occupies residues 133 to 171; sequence RAVRVNATAADAADAWGASAAADDDELIDESALLTELDV. [2Fe-2S] cluster is bound by residues C181, C190, C193, and C195. A fe-S binding site A region spans residues 181–195; the sequence is CDVGAGKKACKNCTC. The [4Fe-4S] cluster site is built by C219, C222, C230, and C233. 2 consecutive short sequence motifs (cx2C motif) follow at residues 219–222 and 230–233; these read CGNC and CAGC. Residues 219 to 233 form a fe-S binding site B region; that stretch reads CGNCALGDAFRCAGC.

Belongs to the anamorsin family. Monomer. [2Fe-2S] cluster is required as a cofactor. Requires [4Fe-4S] cluster as cofactor.

It localises to the cytoplasm. It is found in the mitochondrion intermembrane space. Functionally, component of the cytosolic iron-sulfur (Fe-S) protein assembly (CIA) machinery. Required for the maturation of extramitochondrial Fe-S proteins. Part of an electron transfer chain functioning in an early step of cytosolic Fe-S biogenesis, facilitating the de novo assembly of a [4Fe-4S] cluster on the cytosolic Fe-S scaffold complex. Electrons are transferred from NADPH via a FAD- and FMN-containing diflavin oxidoreductase. Together with the diflavin oxidoreductase, also required for the assembly of the diferric tyrosyl radical cofactor of ribonucleotide reductase (RNR), probably by providing electrons for reduction during radical cofactor maturation in the catalytic small subunit. In Ostreococcus lucimarinus (strain CCE9901), this protein is Anamorsin homolog.